Reading from the N-terminus, the 448-residue chain is Vimentin (448 aa).

A head region spans residues Pro1 to Glu77. The residue at position 9 (Ser9) is a Phosphoserine. The O-linked (GlcNAc) threonine glycan is linked to Thr16. Position 17 is a phosphoserine; by PKC; alternate (Ser17). Ser17 is a glycosylation site (O-linked (GlcNAc) serine; alternate). Residue Ser22 is modified to Phosphoserine; by CaMK2, PKA, PKC and ROCK2. 3 positions are modified to phosphoserine: Ser29, Ser31, and Ser33. Tyr35 carries the phosphotyrosine modification. The residue at position 37 (Ser37) is a Phosphoserine. Phosphoserine; by CDK5 and CDK1 is present on Ser38. Phosphotyrosine is present on Tyr43. Phosphoserine; by PKA and PKC is present on Ser48. Ser54 is subject to Phosphoserine; by AURKB and ROCK2. Ser55 is modified (phosphoserine). A Phosphoserine; by CaMK2 modification is found at Ser65. Residue Ser69 is modified to Phosphoserine. A coil 1A region spans residues Phe78–Leu113. Positions Phe78–Leu113 form a coiled coil. The IF rod domain maps to Glu85 to Ile393. Lys86 participates in a covalent cross-link: Glycyl lysine isopeptide (Lys-Gly) (interchain with G-Cter in SUMO2). A Phosphotyrosine modification is found at Tyr99. Residues Lys102, Lys111, and Lys121 each carry the N6-acetyllysine; alternate modification. N6-succinyllysine; alternate occurs at positions 102 and 111. Glycyl lysine isopeptide (Lys-Gly) (interchain with G-Cter in SUMO2); alternate cross-links involve residues Lys102, Lys111, and Lys121. The tract at residues Leu114–Glu135 is linker 1. Ser126 is modified (phosphoserine). Residues Met136–Leu227 adopt a coiled-coil conformation. Positions Met136–Leu227 are coil 1B. At Lys150 the chain carries N6-acetyllysine. Lys170 is modified (N6-acetyllysine; alternate). Lys170 is modified (N6-succinyllysine; alternate). Ser196 is modified (phosphoserine). Position 205 is an N6-acetyllysine; alternate (Lys205). Residue Lys205 forms a Glycyl lysine isopeptide (Lys-Gly) (interchain with G-Cter in SUMO2); alternate linkage. Ser208 bears the Phosphoserine mark. N6-acetyllysine is present on Lys217. The tract at residues Gln228–Ala250 is linker 12. Lys244 is covalently cross-linked (Glycyl lysine isopeptide (Lys-Gly) (interchain with G-Cter in SUMO2)). The segment at Leu251–Glu389 is coil 2. Lys276 carries the N6-acetyllysine; alternate modification. Position 276 is an N6-succinyllysine; alternate (Lys276). A Glycyl lysine isopeptide (Lys-Gly) (interchain with G-Cter in SUMO2); alternate cross-link involves residue Lys276. Phosphoserine is present on Ser281. The stretch at Asn285 to Glu389 forms a coiled coil. Lys295 participates in a covalent cross-link: Glycyl lysine isopeptide (Lys-Gly) (interchain with G-Cter in SUMO2). The residue at position 307 (Ser307) is a Phosphoserine. The [IL]-x-C-x-x-[DE] motif signature appears at Leu308 to Glu311. Lys355 is modified (N6-acetyllysine; alternate). Lys355 is covalently cross-linked (Glycyl lysine isopeptide (Lys-Gly) (interchain with G-Cter in SUMO2); alternate). Residues Glu390–Glu448 form a tail region. Residues Ser391, Ser394, Ser401, and Ser402 each carry the phosphoserine modification. Phosphothreonine is present on Thr408. The residue at position 412 (Ser412) is a Phosphoserine. Thr418 is modified (phosphothreonine). Ser420 is modified (phosphoserine). Lys421 participates in a covalent cross-link: Glycyl lysine isopeptide (Lys-Gly) (interchain with G-Cter in SUMO2). Position 427 is an N6-acetyllysine; alternate (Lys427). The residue at position 427 (Lys427) is an N6-succinyllysine; alternate. A Glycyl lysine isopeptide (Lys-Gly) (interchain with G-Cter in SUMO2); alternate cross-link involves residue Lys427. Lys427 participates in a covalent cross-link: Glycyl lysine isopeptide (Lys-Gly) (interchain with G-Cter in SUMO1); alternate. A phosphothreonine mark is found at Thr428 and Thr440. Ser441 carries the phosphoserine modification.

The protein belongs to the intermediate filament family. Homomer assembled from elementary dimers. Identified in complexes that contain VIM, EZR, AHNAK, BFSP1, BFSP2, ANK2, PLEC, PRX and spectrin. Interacts with BCAS3. Interacts with LGSN. Interacts with SYNM. Interacts (via rod region) with PLEC (via CH 1 domain). Interacts with STK33. Interacts with LARP6. Interacts with RAB8B. Interacts with TOR1A; the interaction associates TOR1A with the cytoskeleton. Interacts with TOR1AIP1. Interacts with TOR1AIP1. Interacts with DIAPH1. Interacts with EPPK1; interaction is dependent of higher-order structure of intermediate filament. Interacts with the non-receptor tyrosine kinase SRMS; the interaction leads to phosphorylation of VIM. Interacts with NOD2. Interacts (via head region) with CORO1C. Interacts with HDGF. Interacts with PRKCE (via phorbol-ester/DAG-type 2 domain). Interacts with BFSP2. Interacts with PPL. Interacts with PKP1 and PKP2. Interacts with SCRIB (via PDZ domains); the interaction protects SCRIB from proteasomal degradation and facilitates SCRIB localization to intermediate filaments, the interaction is reduced by cell contact inhibition. In terms of processing, one of the most prominent phosphoproteins in various cells of mesenchymal origin. Phosphorylation is enhanced during cell division, at which time vimentin filaments are significantly reorganized. Phosphorylation by PKN1 inhibits the formation of filaments. Filament disassembly during mitosis is promoted by phosphorylation at Ser-37 as well as by nestin. Phosphorylated at Ser-38 by CDK5 during neutrophil secretion in the cytoplasm. Phosphorylated by STK33. Phosphorylated on tyrosine residues by SRMS. S-nitrosylation is induced by interferon-gamma and oxidatively-modified low-densitity lipoprotein (LDL(ox)) possibly implicating the iNOS-S100A8/9 transnitrosylase complex.

Its subcellular location is the cytoplasm. It localises to the cytoskeleton. The protein localises to the nucleus matrix. It is found in the cell membrane. In terms of biological role, vimentins are class-III intermediate filaments found in various non-epithelial cells, especially mesenchymal cells. Vimentin is attached to the nucleus, endoplasmic reticulum, and mitochondria, either laterally or terminally. Plays a role in cell directional movement, orientation, cell sheet organization and Golgi complex polarization at the cell migration front. Protects SCRIB from proteasomal degradation and facilitates its localization to intermediate filaments in a cell contact-mediated manner. Functionally, involved with LARP6 in the stabilization of type I collagen mRNAs for CO1A1 and CO1A2. This chain is Vimentin (VIM), found in Cricetulus griseus (Chinese hamster).